The sequence spans 122 residues: Holo-[acyl-carrier-protein] synthase (122 aa).

Mg(2+) is bound by residues Asp8 and Glu56.

The protein belongs to the P-Pant transferase superfamily. AcpS family. Mg(2+) is required as a cofactor.

It localises to the cytoplasm. The enzyme catalyses apo-[ACP] + CoA = holo-[ACP] + adenosine 3',5'-bisphosphate + H(+). Transfers the 4'-phosphopantetheine moiety from coenzyme A to a Ser of acyl-carrier-protein. The sequence is that of Holo-[acyl-carrier-protein] synthase from Salinispora arenicola (strain CNS-205).